Consider the following 498-residue polypeptide: Protein disulfide-isomerase (498 aa).

The N-terminal stretch at 1–23 (MASFRGSIWYCIFVLSLIAVAIS) is a signal peptide. 2 consecutive Thioredoxin domains span residues 24–143 (AAES…KQSG) and 339–484 (YLKA…KNRD). A glycan (N-linked (GlcNAc...) asparagine) is linked at asparagine 41. Active-site nucleophile residues include cysteine 61, cysteine 64, cysteine 406, and cysteine 409. Intrachain disulfides connect cysteine 61–cysteine 64 and cysteine 406–cysteine 409. The Prevents secretion from ER motif lies at 495 to 498 (KDEL).

The protein belongs to the protein disulfide isomerase family.

Its subcellular location is the endoplasmic reticulum lumen. It catalyses the reaction Catalyzes the rearrangement of -S-S- bonds in proteins.. Functionally, participates in the folding of proteins containing disulfide bonds, may be involved in glycosylation, prolyl hydroxylation and triglyceride transfer. The sequence is that of Protein disulfide-isomerase from Ricinus communis (Castor bean).